Consider the following 472-residue polypeptide: Sarcalumenin (472 aa).

The first 20 residues, 1–20 (MKRLNLLCCCVASLLLLGTA), serve as a signal peptide directing secretion. The N-linked (GlcNAc...) asparagine glycan is linked to L59. The 242-residue stretch at 89–330 (ITSKPMVLFL…IENRMENKIA (242 aa)) folds into the Dynamin-type G domain. Residues 99-106 (GPWSVGKS) are G1 motif. The segment at 127–128 (EP) is G2 motif. Positions 189–192 (DTPG) are G3 motif. A G4 motif region spans residues 254-257 (NKAD). L278 is a region of interest (G5 motif). N-linked (GlcNAc...) asparagine glycans are attached at residues N280 and N388.

This sequence belongs to the TRAFAC class dynamin-like GTPase superfamily. Dynamin/Fzo/YdjA family. In terms of processing, N-glycosylated.

The protein localises to the sarcoplasmic reticulum lumen. Its subcellular location is the sarcoplasmic reticulum membrane. This is Sarcalumenin (SRL) from Gallus gallus (Chicken).